The primary structure comprises 249 residues: Formylaminopyrimidine import ATP-binding protein ThiZ (249 aa).

One can recognise an ABC transporter domain in the interval 6 to 228; that stretch reads LTFEEVSFAY…RRKMETTEKM (223 aa). ATP is bound at residue 39–46; the sequence is AKSGSGKS.

Belongs to the ABC transporter superfamily. The complex is likely composed of an ATP-binding protein (ThiZ), a transmembrane protein (ThiX) and a solute-binding protein (ThiY).

Its subcellular location is the cell membrane. Its pathway is cofactor biosynthesis; thiamine diphosphate biosynthesis. Participates in a thiamine pyrimidine salvage pathway as part of the ABC transporter complex ThiXYZ involved in the import of thiamine degradation products such as the formylaminopyrimidine N-formyl-4-amino-5-aminomethyl-2-methylpyrimidine (FAMP). Is likely responsible for energy coupling to the transport system. This Halalkalibacterium halodurans (strain ATCC BAA-125 / DSM 18197 / FERM 7344 / JCM 9153 / C-125) (Bacillus halodurans) protein is Formylaminopyrimidine import ATP-binding protein ThiZ.